The sequence spans 155 residues: MVDLTQVMDDEVFMAFASYATIILSKMMLMSTATAFYRLTRKVFANPEDCVAFGKGENAKKYLRTDDRVERVRRAHLNDLENIIPFLGIGLLYSLSGPDPSTAILHFRLFVGARIYHTIAYLTPLPQPNRALSFFVGYGVTLSMAYRLLKSKLYL.

Over 3–9 (DLTQVMD) the chain is Lumenal. Residues 10–33 (DEVFMAFASYATIILSKMMLMSTA) traverse the membrane as a helical segment. The Cytoplasmic portion of the chain corresponds to 34 to 62 (TAFYRLTRKVFANPEDCVAFGKGENAKKY). Arg38 contributes to the glutathione binding site. Lys42, Lys55, and Lys60 each carry N6-acetyllysine. Residues 63 to 96 (LRTDDRVERVRRAHLNDLENIIPFLGIGLLYSLS) form a helical membrane-spanning segment. Glutathione-binding residues include Arg73, Arg74, His76, and Glu81. The Lumenal segment spans residues 97–99 (GPD). A helical membrane pass occupies residues 100-123 (PSTAILHFRLFVGARIYHTIAYLT). Glutathione is bound at residue Tyr121. The Cytoplasmic segment spans residues 124–128 (PLPQP). A helical membrane pass occupies residues 129 to 148 (NRALSFFVGYGVTLSMAYRL). At 149–155 (LKSKLYL) the chain is on the lumenal side.

This sequence belongs to the MAPEG family. In terms of assembly, homotrimer; The trimer binds only one molecule of glutathione. Highly expressed in liver.

The protein localises to the endoplasmic reticulum membrane. It localises to the mitochondrion outer membrane. The enzyme catalyses RX + glutathione = an S-substituted glutathione + a halide anion + H(+). Its function is as follows. Conjugation of reduced glutathione to a wide number of exogenous and endogenous hydrophobic electrophiles. This is Microsomal glutathione S-transferase 1 (MGST1) from Homo sapiens (Human).